The sequence spans 190 residues: 6,7-dimethyl-8-ribityllumazine synthase (190 aa).

5-amino-6-(D-ribitylamino)uracil is bound by residues Phe23, 61 to 63, and 85 to 87; these read SFE and AVI. 90–91 lines the (2S)-2-hydroxy-3-oxobutyl phosphate pocket; the sequence is QT. Residue His93 is the Proton donor of the active site. A 5-amino-6-(D-ribitylamino)uracil-binding site is contributed by Phe118. Residue Arg132 coordinates (2S)-2-hydroxy-3-oxobutyl phosphate.

This sequence belongs to the DMRL synthase family.

The enzyme catalyses (2S)-2-hydroxy-3-oxobutyl phosphate + 5-amino-6-(D-ribitylamino)uracil = 6,7-dimethyl-8-(1-D-ribityl)lumazine + phosphate + 2 H2O + H(+). Its pathway is cofactor biosynthesis; riboflavin biosynthesis; riboflavin from 2-hydroxy-3-oxobutyl phosphate and 5-amino-6-(D-ribitylamino)uracil: step 1/2. Functionally, catalyzes the formation of 6,7-dimethyl-8-ribityllumazine by condensation of 5-amino-6-(D-ribitylamino)uracil with 3,4-dihydroxy-2-butanone 4-phosphate. This is the penultimate step in the biosynthesis of riboflavin. This chain is 6,7-dimethyl-8-ribityllumazine synthase, found in Nostoc sp. (strain PCC 7120 / SAG 25.82 / UTEX 2576).